Consider the following 676-residue polypeptide: Hemin receptor (676 aa).

The first 28 residues, 1–28 (MLRSTSDRFRWSSLSLAIACTLPLATQA), serve as a signal peptide directing secretion. The TonB box signature appears at 44–51 (DTMVVTAT). Residues 56-167 (SSFEAPMMVT…LGGVIAYETV (112 aa)) form the TBDR plug domain. In terms of domain architecture, TBDR beta-barrel spans 178–676 (NSGYRVYSSA…NVKFFVSYQW (499 aa)). Residues 659–676 (QGIPQDGRNVKFFVSYQW) carry the TonB C-terminal box motif.

It belongs to the TonB-dependent receptor family.

It localises to the cell outer membrane. Its function is as follows. This protein is involved in the initial step of iron uptake by binding hemin, an iron chelatin siderophore that allows the bacteria to extract iron from the environment. The chain is Hemin receptor (hmuR) from Yersinia pestis.